The chain runs to 223 residues: Phosphoribosylformylglycinamidine synthase subunit PurQ (223 aa).

Positions 3-223 constitute a Glutamine amidotransferase type-1 domain; sequence SAVILLPGLN…LFAGALGITA (221 aa). The active-site Nucleophile is C87. Active-site residues include H197 and E199.

Part of the FGAM synthase complex composed of 1 PurL, 1 PurQ and 2 PurS subunits.

Its subcellular location is the cytoplasm. It catalyses the reaction N(2)-formyl-N(1)-(5-phospho-beta-D-ribosyl)glycinamide + L-glutamine + ATP + H2O = 2-formamido-N(1)-(5-O-phospho-beta-D-ribosyl)acetamidine + L-glutamate + ADP + phosphate + H(+). The enzyme catalyses L-glutamine + H2O = L-glutamate + NH4(+). Its pathway is purine metabolism; IMP biosynthesis via de novo pathway; 5-amino-1-(5-phospho-D-ribosyl)imidazole from N(2)-formyl-N(1)-(5-phospho-D-ribosyl)glycinamide: step 1/2. In terms of biological role, part of the phosphoribosylformylglycinamidine synthase complex involved in the purines biosynthetic pathway. Catalyzes the ATP-dependent conversion of formylglycinamide ribonucleotide (FGAR) and glutamine to yield formylglycinamidine ribonucleotide (FGAM) and glutamate. The FGAM synthase complex is composed of three subunits. PurQ produces an ammonia molecule by converting glutamine to glutamate. PurL transfers the ammonia molecule to FGAR to form FGAM in an ATP-dependent manner. PurS interacts with PurQ and PurL and is thought to assist in the transfer of the ammonia molecule from PurQ to PurL. The sequence is that of Phosphoribosylformylglycinamidine synthase subunit PurQ from Brucella suis biovar 1 (strain 1330).